Here is a 621-residue protein sequence, read N- to C-terminus: tRNA uridine 5-carboxymethylaminomethyl modification enzyme MnmG (621 aa).

8 to 13 (GAGHAG) is a binding site for FAD. The segment at 199–227 (PRIDRRSVDYSRVEEQKGDENPPPFSFST) is disordered. Residues 200-218 (RIDRRSVDYSRVEEQKGDE) show a composition bias toward basic and acidic residues. Position 269–283 (269–283 (GPRYCPSIEDKIFRF)) interacts with NAD(+).

This sequence belongs to the MnmG family. As to quaternary structure, homodimer. Heterotetramer of two MnmE and two MnmG subunits. The cofactor is FAD.

The protein localises to the cytoplasm. NAD-binding protein involved in the addition of a carboxymethylaminomethyl (cmnm) group at the wobble position (U34) of certain tRNAs, forming tRNA-cmnm(5)s(2)U34. The sequence is that of tRNA uridine 5-carboxymethylaminomethyl modification enzyme MnmG from Chlorobium luteolum (strain DSM 273 / BCRC 81028 / 2530) (Pelodictyon luteolum).